The primary structure comprises 271 residues: tRNA (guanine-N(1)-)-methyltransferase (271 aa).

S-adenosyl-L-methionine contacts are provided by residues Gly120 and 145 to 150 (IGDYVL).

The protein belongs to the RNA methyltransferase TrmD family. Homodimer.

The protein localises to the cytoplasm. It carries out the reaction guanosine(37) in tRNA + S-adenosyl-L-methionine = N(1)-methylguanosine(37) in tRNA + S-adenosyl-L-homocysteine + H(+). Functionally, specifically methylates guanosine-37 in various tRNAs. The chain is tRNA (guanine-N(1)-)-methyltransferase from Bifidobacterium longum (strain NCC 2705).